Here is a 436-residue protein sequence, read N- to C-terminus: ATP-dependent protease ATPase subunit HslU (436 aa).

ATP-binding positions include Val18, 60-65 (GVGKTE), Asp249, Glu314, and Arg386.

Belongs to the ClpX chaperone family. HslU subfamily. In terms of assembly, a double ring-shaped homohexamer of HslV is capped on each side by a ring-shaped HslU homohexamer. The assembly of the HslU/HslV complex is dependent on binding of ATP.

The protein localises to the cytoplasm. Its function is as follows. ATPase subunit of a proteasome-like degradation complex; this subunit has chaperone activity. The binding of ATP and its subsequent hydrolysis by HslU are essential for unfolding of protein substrates subsequently hydrolyzed by HslV. HslU recognizes the N-terminal part of its protein substrates and unfolds these before they are guided to HslV for hydrolysis. This Rhizobium rhizogenes (strain K84 / ATCC BAA-868) (Agrobacterium radiobacter) protein is ATP-dependent protease ATPase subunit HslU.